The chain runs to 293 residues: Ribosomal protein L11 methyltransferase (293 aa).

S-adenosyl-L-methionine-binding residues include Thr-145, Gly-166, Asp-188, and Asn-230.

It belongs to the methyltransferase superfamily. PrmA family.

The protein localises to the cytoplasm. It carries out the reaction L-lysyl-[protein] + 3 S-adenosyl-L-methionine = N(6),N(6),N(6)-trimethyl-L-lysyl-[protein] + 3 S-adenosyl-L-homocysteine + 3 H(+). Methylates ribosomal protein L11. In Shewanella baltica (strain OS155 / ATCC BAA-1091), this protein is Ribosomal protein L11 methyltransferase.